We begin with the raw amino-acid sequence, 549 residues long: Alpha-amylase (549 aa).

An N-terminal signal peptide occupies residues 1-34 (MLTFHRIIRKGWMFLLAFLLTALLFCPTGQPAKA). Ca(2+) is bound by residues D139, D196, A218, D220, D231, and D237. D196 lines the Na(+) pocket. Positions 220, 231, 237, and 238 each coordinate Na(+). Ca(2+) is bound at residue D239. D268 (nucleophile) is an active-site residue. H272 provides a ligand contact to Ca(2+). The active-site Proton donor is E298. The Ca(2+) site is built by G337, F339, S440, D441, and D464.

Belongs to the glycosyl hydrolase 13 family. In terms of assembly, monomer. Requires Ca(2+) as cofactor. Na(+) is required as a cofactor.

The protein resides in the secreted. The catalysed reaction is Endohydrolysis of (1-&gt;4)-alpha-D-glucosidic linkages in polysaccharides containing three or more (1-&gt;4)-alpha-linked D-glucose units.. This chain is Alpha-amylase (amyS), found in Geobacillus stearothermophilus (Bacillus stearothermophilus).